We begin with the raw amino-acid sequence, 428 residues long: Nematode resistance protein-like HSPRO1 (428 aa).

Interacts with SNF4.

The protein resides in the cytoplasm. Functionally, positive regulator of basal resistance. The polypeptide is Nematode resistance protein-like HSPRO1 (HSPRO1) (Arabidopsis thaliana (Mouse-ear cress)).